Reading from the N-terminus, the 897-residue chain is 3'-5' exonuclease DinG (897 aa).

Residues 8 to 161 (VVDLETTGNQ…DEDAATTAKL (154 aa)) enclose the Exonuclease domain. In terms of domain architecture, Helicase ATP-binding spans 241–496 (SKAVDQLGLT…KAIDQLEKQR (256 aa)). Residue 276–283 (ASLGSGKS) coordinates ATP. The DEAH box signature appears at 448–451 (DEAH). A Helicase C-terminal domain is found at 703 to 893 (NIDEYVASIV…QFGKLLRQIQ (191 aa)).

It belongs to the helicase family. DinG subfamily. Type 2 sub-subfamily.

3'-5' exonuclease. This chain is 3'-5' exonuclease DinG, found in Staphylococcus aureus (strain MSSA476).